The chain runs to 424 residues: Inhibin beta A chain (424 aa).

Residues 1 to 20 (MPLLWLRGFLLASCWIIVRS) form the signal peptide. Positions 21–308 (SPTPGSEGHG…EDHPHRRRRR (288 aa)) are excised as a propeptide. Asn-165 carries an N-linked (GlcNAc...) asparagine glycan. The span at 264 to 275 (EVDGDGKKKDGS) shows a compositional bias: basic and acidic residues. The interval 264 to 306 (EVDGDGKKKDGSDGGLEEEKEQSHRPFLMLQARQSEDHPHRRR) is disordered. 4 cysteine pairs are disulfide-bonded: Cys-312-Cys-320, Cys-319-Cys-389, Cys-348-Cys-421, and Cys-352-Cys-423.

It belongs to the TGF-beta family. As to quaternary structure, dimeric, linked by one or more disulfide bonds. Inhibin A is a dimer of alpha/INHA and beta-A/INHBA. Activin A is a homodimer of beta-A/INHBA. Activin AB is a dimer of beta-A/INHBA and beta-B/INHBB. Interacts with FST and FSTL3; these interactions prevent activin A interaction to its type II receptor. Activin A interacts with ACVR2A. Activin A interacts with BMPR2. Inhibin A interacts with ACVR1; this interaction creates a non-signaling complex (NSC) that inhibits ACVR1-mediated BMP signaling. Inhibin A interacts with ACVR2A. In terms of tissue distribution, uterus, ovary and liver.

The protein localises to the secreted. Functionally, inhibins/activins are involved in regulating a number of diverse functions such as hypothalamic and pituitary hormone secretion, gonadal hormone secretion, germ cell development and maturation, erythroid differentiation, insulin secretion, nerve cell survival, embryonic axial development or bone growth, depending on their subunit composition. Activin A is a homodimer of INHBA that plays a role in several essential biological processes including embryonic development, stem cell maintenance and differentiation, haematopoiesis, cell proliferation and tissue fibrosis. Signals through type I (such as ACVR1B or ACVR1C) and type II receptors (such as ACVR2A, ACVR2B or BMPR2) which, upon ligand binding, phosphorylate SMAD2 and SMAD3 intracellular signaling mediators that form a complex with SMAD4, translocate to the nucleus and modulate gene expression. Can also activate alternative non-canonical intracellular signaling pathways including the p38 MAPK, extracellular signal-regulated kinases 1/2 (ERK1/2) and c-Jun N-terminal kinases (JNKs) to modulate cell migration and differentiation. Alternatively, promotes osteoblastic differentiation via ACVRL1-SMAD1/5/9 pathway. In addition, can engage the type I receptor ACVR1 to form an ACVR1-activin A-type II receptor non-signaling complex (NSC) that renders receptors unavailable for engagement with BMPs, hence resulting in an apparent inhibition of ACVR1-mediated BMP signaling. Its function is as follows. Inhibin A is a dimer of alpha/INHA and beta-A/INHBA that functions as a feedback regulator in the hypothalamic-pituitary-gonadal (HPG) axis. Inhibits the secretion of FSH from the anterior pituitary gland by acting on pituitary gonadotrope cells. Antagonizes activin A by binding to the proteoglycan, betaglycan, and forming a stable complex with and, thereby, sequestering type II activin receptors while excluding type I receptor. The sequence is that of Inhibin beta A chain (Inhba) from Mus musculus (Mouse).